We begin with the raw amino-acid sequence, 81 residues long: Costars family protein ABRACL (81 aa).

The protein belongs to the costars family.

The sequence is that of Costars family protein ABRACL from Salmo salar (Atlantic salmon).